The following is a 478-amino-acid chain: Ribosomal RNA small subunit methyltransferase F (478 aa).

S-adenosyl-L-methionine-binding positions include 125–131 (AAAPGSK), Glu-149, Asp-176, and Asp-194. The active-site Nucleophile is Cys-247.

It belongs to the class I-like SAM-binding methyltransferase superfamily. RsmB/NOP family.

It localises to the cytoplasm. It catalyses the reaction cytidine(1407) in 16S rRNA + S-adenosyl-L-methionine = 5-methylcytidine(1407) in 16S rRNA + S-adenosyl-L-homocysteine + H(+). In terms of biological role, specifically methylates the cytosine at position 1407 (m5C1407) of 16S rRNA. This chain is Ribosomal RNA small subunit methyltransferase F, found in Serratia proteamaculans (strain 568).